Here is a 932-residue protein sequence, read N- to C-terminus: Protein translocase subunit SecA (932 aa).

ATP is bound by residues glutamine 86, 104–108 (GEGKT), and aspartate 494. The segment at 857-932 (EDAGAEAHAS…KPAPKRKKRR (76 aa)) is disordered. The segment covering 905–915 (TAGSAGDSNLP) has biased composition (polar residues). Residues 920-932 (KTNKPAPKRKKRR) are compositionally biased toward basic residues.

Belongs to the SecA family. Monomer and homodimer. Part of the essential Sec protein translocation apparatus which comprises SecA, SecYEG and auxiliary proteins SecDF. Other proteins may also be involved.

It localises to the cell membrane. It is found in the cytoplasm. It carries out the reaction ATP + H2O + cellular proteinSide 1 = ADP + phosphate + cellular proteinSide 2.. Its function is as follows. Part of the Sec protein translocase complex. Interacts with the SecYEG preprotein conducting channel. Has a central role in coupling the hydrolysis of ATP to the transfer of proteins into and across the cell membrane, serving as an ATP-driven molecular motor driving the stepwise translocation of polypeptide chains across the membrane. This chain is Protein translocase subunit SecA, found in Renibacterium salmoninarum (strain ATCC 33209 / DSM 20767 / JCM 11484 / NBRC 15589 / NCIMB 2235).